We begin with the raw amino-acid sequence, 746 residues long: NAD(P)H-quinone oxidoreductase subunit 5, chloroplastic (746 aa).

Helical transmembrane passes span 9-29 (WIIP…LLLF), 39-59 (IWTF…LYLS), 89-109 (IDPL…LVLI), 125-145 (FAYM…SNLI), 147-167 (VYFF…FWFT), 185-205 (GDFG…SFEF), 221-241 (VNFF…IAKS), 258-278 (TPIS…FLVA), 280-300 (LLPL…IGII), 327-347 (LGYM…FHLI), 354-374 (ALLF…VGYS), 396-416 (TAFL…CFWS), 425-445 (LLFS…TAFY), 547-567 (ILFP…IGIP), 608-628 (FSVS…KPFY), and 723-743 (YLFF…FFYF).

This sequence belongs to the complex I subunit 5 family. In terms of assembly, NDH is composed of at least 16 different subunits, 5 of which are encoded in the nucleus.

It localises to the plastid. Its subcellular location is the chloroplast thylakoid membrane. It carries out the reaction a plastoquinone + NADH + (n+1) H(+)(in) = a plastoquinol + NAD(+) + n H(+)(out). The enzyme catalyses a plastoquinone + NADPH + (n+1) H(+)(in) = a plastoquinol + NADP(+) + n H(+)(out). NDH shuttles electrons from NAD(P)H:plastoquinone, via FMN and iron-sulfur (Fe-S) centers, to quinones in the photosynthetic chain and possibly in a chloroplast respiratory chain. The immediate electron acceptor for the enzyme in this species is believed to be plastoquinone. Couples the redox reaction to proton translocation, and thus conserves the redox energy in a proton gradient. The sequence is that of NAD(P)H-quinone oxidoreductase subunit 5, chloroplastic (ndhF) from Capsella bursa-pastoris (Shepherd's purse).